A 266-amino-acid polypeptide reads, in one-letter code: UPF0294 protein YafD (266 aa).

Belongs to the UPF0294 family.

Its subcellular location is the cytoplasm. The polypeptide is UPF0294 protein YafD (Salmonella newport (strain SL254)).